A 481-amino-acid chain; its full sequence is F-box/LRR-repeat protein At3g03360 (481 aa).

The interval 1 to 28 (MEKESQENSTRPDASSTVFSSSKSTCAS) is disordered. The segment covering 14-28 (ASSTVFSSSKSTCAS) has biased composition (low complexity). One can recognise an F-box domain in the interval 36 to 84 (GDLISRLPDDILQLILSYLPTRLAIKTSVLSRRWRHVWSDTWSLSFHRD). 5 LRR repeats span residues 118-145 (SRPD…SLYL), 196-221 (HCNI…LLFF), 295-320 (EADF…TLGA), 350-375 (ISRY…TIHP), and 413-439 (RRNV…ELIV).

This chain is F-box/LRR-repeat protein At3g03360, found in Arabidopsis thaliana (Mouse-ear cress).